The primary structure comprises 446 residues: Tubulin alpha-2 chain (446 aa).

The short motif at 1 to 4 (MREC) is the MREC motif element. GTP-binding residues include Q11, E68, S137, G141, T142, S176, N203, and N225. Residue E68 participates in Mg(2+) binding. E251 is an active-site residue.

It belongs to the tubulin family. In terms of assembly, dimer of alpha and beta chains. A typical microtubule is a hollow water-filled tube with an outer diameter of 25 nm and an inner diameter of 15 nM. Alpha-beta heterodimers associate head-to-tail to form protofilaments running lengthwise along the microtubule wall with the beta-tubulin subunit facing the microtubule plus end conferring a structural polarity. Microtubules usually have 13 protofilaments but different protofilament numbers can be found in some organisms and specialized cells. Mg(2+) is required as a cofactor. Some glutamate residues at the C-terminus are polyglycylated, resulting in polyglycine chains on the gamma-carboxyl group. Glycylation is mainly limited to tubulin incorporated into axonemes (cilia and flagella) whereas glutamylation is prevalent in neuronal cells, centrioles, axonemes, and the mitotic spindle. Both modifications can coexist on the same protein on adjacent residues, and lowering polyglycylation levels increases polyglutamylation, and reciprocally. The precise function of polyglycylation is still unclear. Post-translationally, some glutamate residues at the C-terminus are polyglutamylated, resulting in polyglutamate chains on the gamma-carboxyl group. Polyglutamylation plays a key role in microtubule severing by spastin (SPAST). SPAST preferentially recognizes and acts on microtubules decorated with short polyglutamate tails: severing activity by SPAST increases as the number of glutamates per tubulin rises from one to eight, but decreases beyond this glutamylation threshold. As to expression, testis specific.

Its subcellular location is the cytoplasm. It localises to the cytoskeleton. It catalyses the reaction GTP + H2O = GDP + phosphate + H(+). In terms of biological role, tubulin is the major constituent of microtubules, a cylinder consisting of laterally associated linear protofilaments composed of alpha- and beta-tubulin heterodimers. Microtubules grow by the addition of GTP-tubulin dimers to the microtubule end, where a stabilizing cap forms. Below the cap, tubulin dimers are in GDP-bound state, owing to GTPase activity of alpha-tubulin. The protein is Tubulin alpha-2 chain of Gallus gallus (Chicken).